Consider the following 207-residue polypeptide: DNA-directed RNA polymerase subunit alpha (207 aa).

This sequence belongs to the RNA polymerase alpha chain family. In plastids the minimal PEP RNA polymerase catalytic core is composed of four subunits: alpha, beta, beta', and beta''. When a (nuclear-encoded) sigma factor is associated with the core the holoenzyme is formed, which can initiate transcription.

Its subcellular location is the plastid. It localises to the chloroplast. The enzyme catalyses RNA(n) + a ribonucleoside 5'-triphosphate = RNA(n+1) + diphosphate. Functionally, DNA-dependent RNA polymerase catalyzes the transcription of DNA into RNA using the four ribonucleoside triphosphates as substrates. This is DNA-directed RNA polymerase subunit alpha (rpoA) from Euglena anabaena (Euglenaria anabaena).